A 265-amino-acid polypeptide reads, in one-letter code: TATA-box-binding protein (265 aa).

The interval 1 to 40 (MYNPSQAVPVSLHKNQDNQDGGQQRSHYPQISSQQSQSYL) is disordered. The segment covering 18–29 (NQDGGQQRSHYP) has biased composition (polar residues). 2 tandem repeats follow at residues 91–167 (LQNI…ARVV) and 181–258 (IQNM…YPIL).

Belongs to the TBP family. Belongs to the TFIID complex together with the TBP-associated factors (TAFs). Binds DNA as monomer.

Its subcellular location is the nucleus. Functionally, general transcription factor that functions at the core of the DNA-binding multiprotein factor TFIID. Binding of TFIID to the TATA box is the initial transcriptional step of the pre-initiation complex (PIC), playing a role in the activation of eukaryotic genes transcribed by RNA polymerase II. The sequence is that of TATA-box-binding protein from Strongylocentrotus purpuratus (Purple sea urchin).